Reading from the N-terminus, the 166-residue chain is NADH-ubiquinone oxidoreductase chain 6 (166 aa).

The next 6 membrane-spanning stretches (helical) occupy residues 4 to 24 (FFSLVLVFLVLSVVVLGVVSA), 27 to 47 (QGVVALMGVSFFCCIFMVFLG), 50 to 70 (FAALVMYIVYLGGLVVVFGYC), 82 to 102 (VGGTKYFIVCVSLLLVVLLCL), 109 to 129 (LLVYVNWGDLVCLEMNGVGVF), and 135 to 155 (WGLIVCSWGLLVVLFSILVIL).

Belongs to the complex I subunit 6 family.

Its subcellular location is the mitochondrion membrane. The catalysed reaction is a ubiquinone + NADH + 5 H(+)(in) = a ubiquinol + NAD(+) + 4 H(+)(out). Core subunit of the mitochondrial membrane respiratory chain NADH dehydrogenase (Complex I) that is believed to belong to the minimal assembly required for catalysis. Complex I functions in the transfer of electrons from NADH to the respiratory chain. The immediate electron acceptor for the enzyme is believed to be ubiquinone. The protein is NADH-ubiquinone oxidoreductase chain 6 (MT-ND6) of Lycodon semicarinatus (Ryukyu odd-tooth snake).